A 337-amino-acid polypeptide reads, in one-letter code: 2-oxoglutarate receptor 1 (337 aa).

Over 1–38 (MIEPLDSPASDSDFLDYPSALGNCTDEQISFKMQYLPV) the chain is Extracellular. The N-linked (GlcNAc...) asparagine glycan is linked to asparagine 23. Residues 39–59 (IYSIIFLVGFPGNTVAISIYI) form a helical membrane-spanning segment. Over 60 to 69 (FKMRPWRGST) the chain is Cytoplasmic. The helical transmembrane segment at 70 to 90 (VIMLNLALTDLLYLTSLPFLI) threads the bilayer. Residues 91–116 (HYYASGENWIFGDFMCKFIRFGFHFN) are Extracellular-facing. A disulfide bridge links cysteine 106 with cysteine 183. A helical transmembrane segment spans residues 117–137 (LYSSILFLTCFSLFRYVVIIH). At 138-151 (PMSCFSIQKTRWAV) the chain is on the cytoplasmic side. A helical transmembrane segment spans residues 152–172 (VACAGVWVISLVAVMPMTFLI). Topologically, residues 173–200 (TSTTRTNRSACLDLTSSDDLTTIKWYNL) are extracellular. The chain crosses the membrane as a helical span at residues 201 to 221 (ILTATTFCLPLVIVTLCYTTI). Topologically, residues 222-242 (ISTLTHGPRTHSCFKQKARRL) are cytoplasmic. Residues 243 to 263 (TILLLLVFYICFLPFHILRVI) form a helical membrane-spanning segment. Residues 264–284 (RIESRLLSISCSIESHIHEAY) are Extracellular-facing. A helical transmembrane segment spans residues 285-305 (IVSRPLAALNTFGNLLLYVVV). Over 306-337 (SNNFQQAFCSIVRCKASGDLEQGKKDSCSNNP) the chain is Cytoplasmic.

This sequence belongs to the G-protein coupled receptor 1 family. Predominantly expressed in the kidney with limited expression in the testis and the smooth muscle. Expressed in SLC26A4/pendrin-positive type B and non-A non-B intercalated cells (at protein level).

The protein resides in the cell membrane. Functionally, g protein-coupled receptor for dicarboxylates and amino dicarboxylates. Receptor for itaconate produced by activated macrophages upon bacterial infection. In the respiratory epithelium, couples the binding of itaconate to the activation of GNA11 and downstream intracellular Ca(2+) release, leading to mucocilliary clearance of airborne pathogens. Receptor for leukotriene E4 (LTE4) produced by mast cells upon allergic inflammation. Binds with high affinity to LTE4 and elicits mucin release from pulmonary epithelium in response to airborne fungi allergens. Regulates mucin-producing goblet cell homeostasis. Receptor for alpha-ketoglutarate produced by proximal tubule renal cells upon metabolic alkalosis. In an intrarenal paracrine signaling pathway, binds alpha-ketoglutarate and drives transepithelial salt reabsorption and bicarbonate secretion by SLC26A4/pendrin-positive intercalated cells. The sequence is that of 2-oxoglutarate receptor 1 (Oxgr1) from Mus musculus (Mouse).